The following is a 269-amino-acid chain: MDTMLNRILAHKRIEVERQRIKTPYDQMRTRAETAPPPRDFGAALRAHHPIALIAEVKKASPSKGVLIENFDPLALARTYASNGAAAISVLTDVRFFQGHLKYIEGIRALFDRGAAPPLPLLRKDFMIDPYQIVEARAYGADAVLLIVAALDDETLAALLALAGDLGMQALVEVHNADELRRALAVGARIIGVNNRDLHSFTTTLETTRHLAALLPSENRPLLVSESGIFTADHVALVRSWGVDAVLVGEALVTAPDIAGKVRELGGRL.

Belongs to the TrpC family.

The enzyme catalyses 1-(2-carboxyphenylamino)-1-deoxy-D-ribulose 5-phosphate + H(+) = (1S,2R)-1-C-(indol-3-yl)glycerol 3-phosphate + CO2 + H2O. Its pathway is amino-acid biosynthesis; L-tryptophan biosynthesis; L-tryptophan from chorismate: step 4/5. This is Indole-3-glycerol phosphate synthase from Roseiflexus castenholzii (strain DSM 13941 / HLO8).